Consider the following 418-residue polypeptide: Endoglucanase EG-II (418 aa).

Residues 1–21 (MNKSVAPLLLAASILYGGAVA) form the signal peptide. Gln22 is subject to Pyrrolidone carboxylic acid. The 36-residue stretch at 22–57 (QQTVWGQCGGIGWSGPTNCAPGSACSTLNPYYAQCI) folds into the CBM1 domain. A linker region spans residues 58 to 91 (PGATTITTSTRPPSGPTTTTRATSTSSSTPPTSS). Positions 63-91 (ITTSTRPPSGPTTTTRATSTSSSTPPTSS) are disordered. A catalytic region spans residues 92–418 (GVRFAGVNIA…SLVSSCLARK (327 aa)). An intrachain disulfide couples Cys107 to Cys113. Asn124 is a glycosylation site (N-linked (GlcNAc) asparagine). Cys183 and Cys190 form a disulfide bridge. The active-site Proton donor/acceptor is Glu239. 2 disulfide bridges follow: Cys323–Cys359 and Cys364–Cys414. Glu350 acts as the Nucleophile in catalysis.

Belongs to the glycosyl hydrolase 5 (cellulase A) family.

The protein localises to the secreted. It carries out the reaction Endohydrolysis of (1-&gt;4)-beta-D-glucosidic linkages in cellulose, lichenin and cereal beta-D-glucans.. Functionally, endoglucanase (EG) that cleaves the internal beta-1,4-glucosidic bonds in cellulose. The degradation of cellulose involves an interplay between different cellulolytic enzymes. Hydrolysis starts with EGs, which cut internal glycosidic linkages to reduce the polymerization degree of the substrate and creates new chain ends for exocellobiohydrolases (CBHs). The CBH release the disaccharide cellobiose from the non-reducing end of the cellulose polymer chain. Finally, beta-1,4-glucosidases hydrolyze the cellobiose and other short cello-oligosaccharides into glucose units. In Hypocrea jecorina (Trichoderma reesei), this protein is Endoglucanase EG-II (egl2).